The chain runs to 231 residues: Large ribosomal subunit protein uL1 (231 aa).

It belongs to the universal ribosomal protein uL1 family. Part of the 50S ribosomal subunit.

Its function is as follows. Binds directly to 23S rRNA. The L1 stalk is quite mobile in the ribosome, and is involved in E site tRNA release. In terms of biological role, protein L1 is also a translational repressor protein, it controls the translation of the L11 operon by binding to its mRNA. The sequence is that of Large ribosomal subunit protein uL1 from Buchnera aphidicola subsp. Acyrthosiphon pisum (strain 5A).